A 359-amino-acid chain; its full sequence is 3-isopropylmalate dehydrogenase (359 aa).

77 to 88 (GPKWGTGDVRPE) lines the NAD(+) pocket. The substrate site is built by arginine 95, arginine 105, arginine 134, and aspartate 223. 3 residues coordinate Mg(2+): aspartate 223, aspartate 248, and aspartate 252. 287–298 (GSAPDLPAGKVN) serves as a coordination point for NAD(+).

This sequence belongs to the isocitrate and isopropylmalate dehydrogenases family. As to quaternary structure, homodimer. Mg(2+) serves as cofactor. Mn(2+) is required as a cofactor.

The protein resides in the cytoplasm. The enzyme catalyses (2R,3S)-3-isopropylmalate + NAD(+) = 4-methyl-2-oxopentanoate + CO2 + NADH. Its pathway is amino-acid biosynthesis; L-leucine biosynthesis; L-leucine from 3-methyl-2-oxobutanoate: step 3/4. Functionally, catalyzes the oxidation of 3-carboxy-2-hydroxy-4-methylpentanoate (3-isopropylmalate) to 3-carboxy-4-methyl-2-oxopentanoate. The product decarboxylates to 4-methyl-2 oxopentanoate. The sequence is that of 3-isopropylmalate dehydrogenase (LEU2) from Diutina rugosa (Yeast).